The primary structure comprises 105 residues: Met repressor (105 aa).

Belongs to the MetJ family. Homodimer.

It localises to the cytoplasm. In terms of biological role, this regulatory protein, when combined with SAM (S-adenosylmethionine) represses the expression of the methionine regulon and of enzymes involved in SAM synthesis. The chain is Met repressor from Serratia proteamaculans (strain 568).